The sequence spans 183 residues: MKIRPDDQWRWYFDSEHSRVMLDLANGMVFRSRFLAKMLTDYAITMEEMPFSVDDAALYYAFEEHFRCINIASELRAELALNGVVAFRFMKPQMPKSWYFSSFSVMTKPEQGEIVQVRLQDCGTEVLFMVAEVGDSASLCLLAQQKLELSDRVMNFCDPIKIMNDRLMPYVEPTRETIYGRVI.

It belongs to the ZapC family. As to quaternary structure, interacts directly with FtsZ.

The protein localises to the cytoplasm. Contributes to the efficiency of the cell division process by stabilizing the polymeric form of the cell division protein FtsZ. Acts by promoting interactions between FtsZ protofilaments and suppressing the GTPase activity of FtsZ. The chain is Cell division protein ZapC from Xenorhabdus bovienii (strain SS-2004) (Xenorhabdus nematophila subsp. bovienii).